The sequence spans 221 residues: Placenta growth factor (221 aa).

Positions 1–18 (MPVMRLFPCFLQLLAGLA) are cleaved as a signal peptide. A glycan (N-linked (GlcNAc...) asparagine) is linked at N33. 3 disulfides stabilise this stretch: C52-C94, C83-C128, and C87-C130. A glycan (N-linked (GlcNAc...) asparagine) is linked at N101. The tract at residues 175 to 221 (QSAVWPSSPVPEEIPRMHPGRNGKKQQRKPLREKMKPERCGDAVPRR) is disordered. Positions 192 to 203 (HPGRNGKKQQRK) are enriched in basic residues. Residues 193–213 (PGRNGKKQQRKPLREKMKPER) are heparin-binding. Over residues 204-221 (PLREKMKPERCGDAVPRR) the composition is skewed to basic and acidic residues.

Belongs to the PDGF/VEGF growth factor family. Antiparallel homodimer; disulfide-linked. Also found as heterodimer with VEGFA/VEGF. Isoform PlGF-3 is found both as homodimer and as monomer. Post-translationally, N-glycosylated. While the three isoforms are present in most placental tissues, PlGF-2 is specific to early (8 week) placenta and only PlGF-1 is found in the colon and mammary carcinomas.

It localises to the secreted. In terms of biological role, growth factor active in angiogenesis and endothelial cell growth, stimulating their proliferation and migration. It binds to the receptor FLT1/VEGFR-1. Isoform PlGF-2 binds NRP1/neuropilin-1 and NRP2/neuropilin-2 in a heparin-dependent manner. Also promotes cell tumor growth. The chain is Placenta growth factor (PGF) from Homo sapiens (Human).